The primary structure comprises 928 residues: Receptor-like kinase TMK4 (928 aa).

The first 24 residues, 1–24, serve as a signal peptide directing secretion; the sequence is MEAPTPLLLLVLLTTITFFTTSVA. The Extracellular portion of the chain corresponds to 25-472; the sequence is DDQTAMLALA…GGSSGGGGSK (448 aa). A disulfide bridge links Cys-51 with Cys-58. LRR repeat units lie at residues 61-84, 85-107, 108-130, 132-157, 158-180, 181-205, 207-229, 230-251, 252-276, and 278-298; these read GRVT…ISTL, SELK…FAKL, SSLQ…AFAG, TSLQ…LVDS, TSLT…IFDS, LASL…LGKS, IQNL…LSSM, TSLS…DLSK, SENL…LLTL, and SLKN…LFSP. Asn-144 is a glycosylation site (N-linked (GlcNAc...) asparagine). N-linked (GlcNAc...) asparagine glycosylation is present at Asn-193. An N-linked (GlcNAc...) asparagine glycan is attached at Asn-281. Intrachain disulfides connect Cys-310/Cys-318 and Cys-348/Cys-356. LRR repeat units follow at residues 360-383, 384-407, and 408-435; these read GKNV…AIAN, LTSL…ELTF, and MTSL…VKFS. An N-linked (GlcNAc...) asparagine glycan is attached at Asn-383. A disordered region spans residues 445-465; it reads TNGGDGSSPGTGGASGGPGGS. Residues 473–493 traverse the membrane as a helical segment; that stretch reads VGVIVGVIVAVLVFLAILGFV. Residues 494-928 lie on the Cytoplasmic side of the membrane; sequence VYKFVMKRKY…PNTFDSADGR (435 aa). In terms of domain architecture, Protein kinase spans 578 to 858; that stretch reads FSEDNILGRG…HAVNVLGPLV (281 aa). ATP is bound by residues 584-592 and Lys-606; that span reads LGRGGFGVV. The Proton acceptor role is filled by Asp-707. 2 stretches are compositionally biased toward polar residues: residues 898–911 and 918–928; these read FHGD…QSSI and FPNTFDSADGR. The tract at residues 898–928 is disordered; it reads FHGDFSYSQTQSSIPPKASGFPNTFDSADGR.

This sequence belongs to the protein kinase superfamily. Ser/Thr protein kinase family. Interacts with BAK1 (via kinase domain), SERK4 and SERK5. In terms of tissue distribution, expressed in roots, leaves, stems, siliques and flowers. Ubiquitous, with a high expression in mature pollen grains and in the pericycle and the xylem vasculature of the primary and lateral roots.

The protein resides in the membrane. The enzyme catalyses L-seryl-[protein] + ATP = O-phospho-L-seryl-[protein] + ADP + H(+). It catalyses the reaction L-threonyl-[protein] + ATP = O-phospho-L-threonyl-[protein] + ADP + H(+). Functionally, involved in auxin signal transduction and cell expansion and proliferation regulation. May be involved in brassinosteroid-mediated plant growth and development via auxin regulation. May be involved in microspore and pollen development. The protein is Receptor-like kinase TMK4 of Arabidopsis thaliana (Mouse-ear cress).